Here is a 132-residue protein sequence, read N- to C-terminus: Agouti-signaling protein (132 aa).

A signal peptide spans 1–22 (MDVTRLLLATLLVFLCFFTAYS). Asn-39 carries N-linked (GlcNAc...) asparagine glycosylation. The disordered stretch occupies residues 57–88 (KKSKQTSRKEAEKKRSSKKEASMKKVARPRTP). The span at 63 to 79 (SRKEAEKKRSSKKEASM) shows a compositional bias: basic and acidic residues. 5 cysteine pairs are disulfide-bonded: Cys-93–Cys-108, Cys-100–Cys-114, Cys-107–Cys-125, Cys-111–Cys-132, and Cys-116–Cys-123. The Agouti domain occupies 93–132 (CVATRDSCKPPAPACCDPCASCQCRFFRSACSCRVLSLNC).

The protein localises to the secreted. Functionally, involved in the regulation of melanogenesis. The binding of ASP to MC1R precludes alpha-MSH initiated signaling and thus blocks production of cAMP, leading to a down-regulation of eumelanogenesis (brown/black pigment) and thus increasing synthesis of pheomelanin (yellow/red pigment). The protein is Agouti-signaling protein (ASIP) of Macaca assamensis (Assam macaque).